Consider the following 140-residue polypeptide: Nucleoside diphosphate kinase (140 aa).

Residues Lys11, Phe59, Arg87, Thr93, Arg104, and Asn114 each coordinate ATP. The active-site Pros-phosphohistidine intermediate is the His117.

The protein belongs to the NDK family. In terms of assembly, homotetramer. Mg(2+) serves as cofactor.

The protein localises to the cytoplasm. The enzyme catalyses a 2'-deoxyribonucleoside 5'-diphosphate + ATP = a 2'-deoxyribonucleoside 5'-triphosphate + ADP. It catalyses the reaction a ribonucleoside 5'-diphosphate + ATP = a ribonucleoside 5'-triphosphate + ADP. In terms of biological role, major role in the synthesis of nucleoside triphosphates other than ATP. The ATP gamma phosphate is transferred to the NDP beta phosphate via a ping-pong mechanism, using a phosphorylated active-site intermediate. This Francisella tularensis subsp. tularensis (strain SCHU S4 / Schu 4) protein is Nucleoside diphosphate kinase.